The primary structure comprises 325 residues: Acetyl-coenzyme A carboxylase carboxyl transferase subunit alpha (325 aa).

In terms of domain architecture, CoA carboxyltransferase C-terminal spans 44-298 (QLEGRAEQLR…KTAILSNLEE (255 aa)).

This sequence belongs to the AccA family. As to quaternary structure, acetyl-CoA carboxylase is a heterohexamer composed of biotin carboxyl carrier protein (AccB), biotin carboxylase (AccC) and two subunits each of ACCase subunit alpha (AccA) and ACCase subunit beta (AccD).

It localises to the cytoplasm. The catalysed reaction is N(6)-carboxybiotinyl-L-lysyl-[protein] + acetyl-CoA = N(6)-biotinyl-L-lysyl-[protein] + malonyl-CoA. It participates in lipid metabolism; malonyl-CoA biosynthesis; malonyl-CoA from acetyl-CoA: step 1/1. Functionally, component of the acetyl coenzyme A carboxylase (ACC) complex. First, biotin carboxylase catalyzes the carboxylation of biotin on its carrier protein (BCCP) and then the CO(2) group is transferred by the carboxyltransferase to acetyl-CoA to form malonyl-CoA. This chain is Acetyl-coenzyme A carboxylase carboxyl transferase subunit alpha, found in Acaryochloris marina (strain MBIC 11017).